A 168-amino-acid chain; its full sequence is Ribosome maturation factor RimM (168 aa).

A PRC barrel domain is found at 93-168 (EDEFYQSDLV…IVLNIPEFID (76 aa)).

The protein belongs to the RimM family. Binds ribosomal protein uS19.

The protein localises to the cytoplasm. Functionally, an accessory protein needed during the final step in the assembly of 30S ribosomal subunit, possibly for assembly of the head region. Essential for efficient processing of 16S rRNA. May be needed both before and after RbfA during the maturation of 16S rRNA. It has affinity for free ribosomal 30S subunits but not for 70S ribosomes. The chain is Ribosome maturation factor RimM from Wolbachia pipientis wMel.